The sequence spans 253 residues: Ribosomal RNA small subunit methyltransferase J (253 aa).

Residues 101-102, 117-118, and Asp169 each bind S-adenosyl-L-methionine; these read RD and ER.

The protein belongs to the methyltransferase superfamily. RsmJ family.

The protein resides in the cytoplasm. It catalyses the reaction guanosine(1516) in 16S rRNA + S-adenosyl-L-methionine = N(2)-methylguanosine(1516) in 16S rRNA + S-adenosyl-L-homocysteine + H(+). In terms of biological role, specifically methylates the guanosine in position 1516 of 16S rRNA. The polypeptide is Ribosomal RNA small subunit methyltransferase J (Psychromonas ingrahamii (strain DSM 17664 / CCUG 51855 / 37)).